The sequence spans 305 residues: tRNA pseudouridine synthase B (305 aa).

Residue Asp-48 is the Nucleophile of the active site.

This sequence belongs to the pseudouridine synthase TruB family. Type 1 subfamily.

It carries out the reaction uridine(55) in tRNA = pseudouridine(55) in tRNA. In terms of biological role, responsible for synthesis of pseudouridine from uracil-55 in the psi GC loop of transfer RNAs. This chain is tRNA pseudouridine synthase B, found in Pseudomonas fluorescens (strain Pf0-1).